The primary structure comprises 103 residues: Trp operon repressor homolog (103 aa).

The DNA-binding element occupies 59–82; it reads QRQISQMLGVGIATITRGSNELKS.

It belongs to the TrpR family. In terms of assembly, homodimer.

The protein localises to the cytoplasm. Functionally, this protein is an aporepressor. When complexed with L-tryptophan it binds the operator region of the trp operon and prevents the initiation of transcription. The chain is Trp operon repressor homolog from Vibrio parahaemolyticus serotype O3:K6 (strain RIMD 2210633).